The sequence spans 158 residues: Male-specific protein scotti (158 aa).

Residues 24–43 (NVPDGNGDGDGDGDGDGNDA) form a disordered region. The segment covering 30–42 (GDGDGDGDGDGND) has biased composition (acidic residues).

It belongs to the male-specific scotti family.

Functionally, post-meiotically transcribed gene that has a role in late spermiogenesis; required for actin cone progression during spermatid individualization. The polypeptide is Male-specific protein scotti (Drosophila virilis (Fruit fly)).